The sequence spans 562 residues: Nucleoprotein (562 aa).

The interval 54–237 (LRKTKRTDGD…ITKDESAINI (184 aa)) is binding site for the cap structure m7GTP. Positions 381 and 383 each coordinate Mn(2+). Residues E391, C498, H501, and C523 each contribute to the Zn(2+) site. D527 contributes to the Mn(2+) binding site.

It belongs to the arenaviridae nucleocapsid protein family. As to quaternary structure, homomultimerizes to form the nucleocapsid. Binds to viral genomic RNA. Interacts with glycoprotein G2. Interacts with protein Z; this interaction probably directs the encapsidated genome to budding sites. Interacts with protein L; this interaction does not interfere with Z-L interaction. Interacts with host IKBKE (via Protein kinase domain); the interaction inhibits IKBKE kinase activity.

It is found in the virion. The protein resides in the host cytoplasm. In terms of biological role, encapsidates the genome, protecting it from nucleases. The encapsidated genomic RNA is termed the nucleocapsid (NC). Serves as template for viral transcription and replication. The increased presence of protein N in host cell does not seem to trigger the switch from transcription to replication as observed in other negative strain RNA viruses. Through the interaction with host IKBKE, strongly inhibits the phosphorylation and nuclear translocation of host IRF3, a protein involved in interferon activation pathway, leading to the inhibition of interferon-beta and IRF3-dependent promoters activation. Also encodes a functional 3'-5' exoribonuclease that degrades preferentially dsRNA substrates and thereby participates in the suppression of interferon induction. In Homo sapiens (Human), this protein is Nucleoprotein.